Consider the following 610-residue polypeptide: MWLPLVLLLAVLLLAVLCKVYLGLFSGSSPNPFSEDVKRPPAPLVTDKEARKKVLKQAFSANQVPEKLDVVVIGSGFGGLAAAAILAKAGKRVLVLEQHTKAGGCCHTFGKNGLEFDTGIHYIGRMEEGSIGRFILDQITEGQLDWAPLSSPFDIMVLEGPNGRKEYPMYSGEKAYIQGLKEKFPQEEAIIDKYIKLVKVVSSGAPHAILLKFLPLPVVQLLDRCGLLTRFSPFLQASTQSLAEVLQQLGASSELQAVLSYIFPTYGVTPNHSAFSMHALLVNHYMKGGFYPRGGSSEIAFHTIPVIQRAGGAVLTKATVQSVLLDSAGKACGVSVKKGHELVNIYCPIVVSNAGLFNTYEHLLPGNARCLPGVKQQLGTVRPGLGMTSVFICLRGTKEDLHLPSTNYYVYYDTDMDQAMERYVSMPREEAAEHIPLLFFAFPSAKDPTWEDRFPGRSTMIMLIPTAYEWFEEWQAELKGKRGSDYETFKNSFVEASMSVVLKLFPQLEGKVESVTAGSPLTNQFYLAAPRGACYGADHDLGRLHPCVMASLRAQSPIPNLYLTGQDIFTCGLVGALQGALLCSSAILKRNLYSDLKNLDSRIRAQKKKN.

The N-terminal stretch at 1–18 (MWLPLVLLLAVLLLAVLC) is a signal peptide.

Belongs to the carotenoid/retinoid oxidoreductase family. CrtISO subfamily. NAD(+) is required as a cofactor. The cofactor is NADP(+). FAD serves as cofactor. As to expression, expressed in liver; expression positively correlates with obesity and liver steatosis. Expressed in adipose tissue; expression tends to be decreased in obese versus lean individuals.

It localises to the endoplasmic reticulum membrane. It catalyses the reaction all-trans-13,14-dihydroretinol + A = all-trans-retinol + AH2. Its function is as follows. Catalyzes the saturation of all-trans-retinol to all-trans-13,14-dihydroretinol. Does not exhibit any activity toward all-trans-retinoic acid, nor 9-cis, 11-cis or 13-cis-retinol isomers. May play a role in the metabolism of vitamin A. Independently of retinol conversion, may regulate liver metabolism upstream of MLXIPL/ChREBP. May play a role in adipocyte differentiation. The polypeptide is All-trans-retinol 13,14-reductase (RETSAT) (Homo sapiens (Human)).